The chain runs to 232 residues: 2,3-bisphosphoglycerate-dependent phosphoglycerate mutase (232 aa).

Residues 10-17, 23-24, Arg62, 89-92, Lys100, 116-117, and 185-186 each bind substrate; these read RHGESQWN, TG, ERHY, RR, and GN. Catalysis depends on His11, which acts as the Tele-phosphohistidine intermediate. The active-site Proton donor/acceptor is the Glu89.

Belongs to the phosphoglycerate mutase family. BPG-dependent PGAM subfamily. In terms of assembly, homodimer.

It carries out the reaction (2R)-2-phosphoglycerate = (2R)-3-phosphoglycerate. Its pathway is carbohydrate degradation; glycolysis; pyruvate from D-glyceraldehyde 3-phosphate: step 3/5. Functionally, catalyzes the interconversion of 2-phosphoglycerate and 3-phosphoglycerate. This is 2,3-bisphosphoglycerate-dependent phosphoglycerate mutase from Blochmanniella floridana.